A 216-amino-acid polypeptide reads, in one-letter code: Pyrophosphatase PpaX (216 aa).

Residue aspartate 12 is the Nucleophile of the active site.

The protein belongs to the HAD-like hydrolase superfamily. PpaX family. Requires Mg(2+) as cofactor.

It catalyses the reaction diphosphate + H2O = 2 phosphate + H(+). In terms of biological role, hydrolyzes pyrophosphate formed during P-Ser-HPr dephosphorylation by HPrK/P. Might play a role in controlling the intracellular pyrophosphate pool. This chain is Pyrophosphatase PpaX, found in Bacillus velezensis (strain DSM 23117 / BGSC 10A6 / LMG 26770 / FZB42) (Bacillus amyloliquefaciens subsp. plantarum).